A 413-amino-acid chain; its full sequence is Interferon-inducible GTPase 1 (413 aa).

Glycine 2 is lipidated: N-myristoyl glycine. In terms of domain architecture, IRG-type G spans 68–250 (SVLNVAVTGE…PVLMDKLISD (183 aa)). 7 residues coordinate GDP: glycine 79, glycine 81, lysine 82, serine 83, serine 84, threonine 102, and glycine 103. Threonine 102 is modified ((Microbial infection) Phosphothreonine; by ROP18). At threonine 108 the chain carries (Microbial infection) Phosphothreonine; by ROP18. Residues lysine 184, aspartate 186, serine 187, and asparagine 232 each coordinate GDP. An intrachain disulfide couples cysteine 236 to cysteine 410.

This sequence belongs to the TRAFAC class dynamin-like GTPase superfamily. IRG family. Monomer, as apoenzyme and in the GDP-bound form. Homooligomer, upon GTP binding. Interacts with HOOK3. As to quaternary structure, (Microbial infection) Interacts with Toxoplasma gondii GRA7 in GTP-dependent manner; the interaction results in faster turnover of the GTP-activated IIGP1 oligomer. Interacts with T.gondii ROP5; the interaction results in inhibition of IRGA6/IIGP1 GTPase activity and oligomerization. Post-translationally, myristoylated. In terms of processing, (Microbial infection) Phosphorylated by Toxoplasma gondii ROP18 from virulent strains.

The protein resides in the cytoplasm. Its subcellular location is the nucleus membrane. It localises to the endoplasmic reticulum membrane. It is found in the golgi apparatus. The protein localises to the golgi stack membrane. The protein resides in the parasitophorous vacuole membrane. The enzyme catalyses GTP + H2O = GDP + phosphate + H(+). Functionally, GTPase with low activity. Has higher affinity for GDP than for GTP. Plays a role in resistance to intracellular pathogens. During infection with avirulent Toxoplasma gondii strains, recruited to the parasitophorous vacuole membrane. Required for disruption of the parasitophorous vacuole formed following T.gondii infection and subsequent killing of the parasite. Mediates resistance to Chlamydia trachomatis infection by targeting bacterial inclusions to autophagosomes for subsequent lysosomal destruction. In Mus musculus (Mouse), this protein is Interferon-inducible GTPase 1 (Iigp1).